A 482-amino-acid polypeptide reads, in one-letter code: Isoxanthopterin deaminase (482 aa).

Zn(2+) is bound by residues H74 and H76. Q79 is a binding site for substrate. Residue H246 coordinates Zn(2+). Residues E249 and H283 each contribute to the substrate site. Zn(2+) is bound by residues H283 and D334.

It belongs to the metallo-dependent hydrolases superfamily. ATZ/TRZ family. Requires Zn(2+) as cofactor.

The catalysed reaction is a 2-amino-4-hydroxypteridine + H2O + H(+) = a 2,4-dihydroxypteridine + NH4(+). This chain is Isoxanthopterin deaminase, found in Unknown prokaryotic organism.